We begin with the raw amino-acid sequence, 308 residues long: MNNNELIEKINKLRKEKNAIILAHYYQRPEIQDIADFIGDSLELSRIAQKSDADIIVFCGVRFMAETAKILNPTKKVLHPNPESGCPMADMATLEGVKKLKQEHPDAVVVSYINTNADVKTVSDVIVTSRNAVKVVKSLDAKKIIFVPDQFLGSYIARQVPEKEFILWKGFCPPHFNLSKETLLELKQRYPEAKIAVHPECNTDTVEIADFVGSTTQIIEYATTCDADTVIIGTEVGILHALKKKNPNKNYVFPQSADYCGTVHCCDMKKNTLDKVLEVLEKETNEIILPSEIIQKAVIPLERMLAVA.

2 residues coordinate iminosuccinate: histidine 24 and serine 41. Residue cysteine 86 coordinates [4Fe-4S] cluster. Residues 112–114 (YIN) and serine 129 each bind iminosuccinate. Cysteine 172 is a binding site for [4Fe-4S] cluster. Residues 198–200 (HPE) and threonine 215 contribute to the iminosuccinate site. Cysteine 265 serves as a coordination point for [4Fe-4S] cluster.

It belongs to the quinolinate synthase family. Type 2 subfamily. [4Fe-4S] cluster is required as a cofactor.

The protein resides in the cytoplasm. It catalyses the reaction iminosuccinate + dihydroxyacetone phosphate = quinolinate + phosphate + 2 H2O + H(+). It functions in the pathway cofactor biosynthesis; NAD(+) biosynthesis; quinolinate from iminoaspartate: step 1/1. In terms of biological role, catalyzes the condensation of iminoaspartate with dihydroxyacetone phosphate to form quinolinate. The sequence is that of Quinolinate synthase from Sulfurihydrogenibium sp. (strain YO3AOP1).